Here is a 301-residue protein sequence, read N- to C-terminus: tRNA dimethylallyltransferase (301 aa).

8–15 (GATGTGKS) provides a ligand contact to ATP. 10 to 15 (TGTGKS) serves as a coordination point for substrate. An interaction with substrate tRNA region spans residues 33–36 (DSMQ).

The protein belongs to the IPP transferase family. As to quaternary structure, monomer. Mg(2+) is required as a cofactor.

It carries out the reaction adenosine(37) in tRNA + dimethylallyl diphosphate = N(6)-dimethylallyladenosine(37) in tRNA + diphosphate. Catalyzes the transfer of a dimethylallyl group onto the adenine at position 37 in tRNAs that read codons beginning with uridine, leading to the formation of N6-(dimethylallyl)adenosine (i(6)A). The sequence is that of tRNA dimethylallyltransferase from Tropheryma whipplei (strain Twist) (Whipple's bacillus).